Reading from the N-terminus, the 535-residue chain is Methylmalonate-semialdehyde/malonate-semialdehyde dehydrogenase [acylating], mitochondrial (535 aa).

The N-terminal 32 residues, 1–32, are a transit peptide targeting the mitochondrion; that stretch reads MAAAVAAAAAVRSRILQVSSKVNSTWYPASSF. N6-acetyllysine; alternate is present on residues Lys47, Lys52, Lys55, and Lys76. N6-succinyllysine; alternate occurs at positions 47, 52, 55, and 76. Lys87 is subject to N6-acetyllysine. 2 positions are modified to N6-acetyllysine; alternate: Lys117 and Lys129. N6-succinyllysine; alternate is present on residues Lys117 and Lys129. NAD(+) contacts are provided by Ala183, Phe185, Lys209, Glu212, Arg213, and Ser262. Ser262 is modified (phosphoserine). The residue at position 298 (Lys298) is an N6-acetyllysine. The active-site Nucleophile is the Cys317. N6-acetyllysine occurs at positions 330 and 331. N6-acetyllysine; alternate is present on residues Lys364 and Lys376. An N6-succinyllysine; alternate mark is found at Lys364 and Lys376. Ser380 carries the phosphoserine modification. Lys391 is modified (N6-succinyllysine). Glu417 is an NAD(+) binding site. Lys500 carries the N6-acetyllysine modification. Residue Lys517 is modified to N6-succinyllysine.

This sequence belongs to the aldehyde dehydrogenase family. In terms of assembly, homotetramer. As to expression, expressed in the head and flagellum of epididymal sperm but not in testicular sperm (at protein level). Kidney &gt; liver &gt; heart &gt; muscle &gt; brain.

Its subcellular location is the mitochondrion. The catalysed reaction is 3-oxopropanoate + NAD(+) + CoA + H2O = hydrogencarbonate + acetyl-CoA + NADH + H(+). It carries out the reaction 2-methyl-3-oxopropanoate + NAD(+) + CoA + H2O = propanoyl-CoA + hydrogencarbonate + NADH + H(+). It catalyses the reaction (R)-2-methyl-3-oxopropanoate + NAD(+) + CoA + H2O = propanoyl-CoA + hydrogencarbonate + NADH + H(+). The enzyme catalyses (S)-2-methyl-3-oxopropanoate + NAD(+) + CoA + H2O = propanoyl-CoA + hydrogencarbonate + NADH + H(+). Its function is as follows. Malonate and methylmalonate semialdehyde dehydrogenase involved in the catabolism of valine, thymine, and compounds catabolized by way of beta-alanine, including uracil and cytidine. The polypeptide is Methylmalonate-semialdehyde/malonate-semialdehyde dehydrogenase [acylating], mitochondrial (Rattus norvegicus (Rat)).